The chain runs to 86 residues: MKPGIHPEYRKVVFHDTSVDHYFVVGSTLQTDRTIEWEDGQTYPYFTIEVSSESHPFYTGKQRVVQKEGRVANFNRRFAQFGSKEG.

Belongs to the bacterial ribosomal protein bL31 family. Type B subfamily. In terms of assembly, part of the 50S ribosomal subunit.

The chain is Large ribosomal subunit protein bL31B from Vibrio vulnificus (strain YJ016).